We begin with the raw amino-acid sequence, 812 residues long: ISWI one complex protein 2 (812 aa).

4 disordered regions span residues 1–21 (MRTK…AGAA), 614–646 (MGNS…KRKP), 679–704 (AKQR…LEEL), and 762–812 (QTGS…PPTN). The span at 627–638 (PQSTLEPSTKSS) shows a compositional bias: polar residues. A coiled-coil region spans residues 673-714 (ELKIIRAKQRKQQEDRERRKKMKEEKKRLEELAKKRELTESV). The segment covering 683 to 704 (KQQEDRERRKKMKEEKKRLEEL) has biased composition (basic and acidic residues). Residues 769–796 (PQAPQAPQTSQASIQPQQQQQQQQQQQP) show a composition bias toward low complexity.

As to quaternary structure, component of the ISW1B complex, which at least consists of ISW1, IOC2 and IOC4.

It localises to the nucleus. Functionally, functions as a component of the ISW1B complex, which acts in remodeling the chromatin by catalyzing an ATP-dependent alteration in the structure of nucleosomal DNA. The ISW1B complex acts within coding regions to control the amount of RNA polymerase II released into productive elongation and to coordinate elongation with termination and pre-mRNA processing. This is ISWI one complex protein 2 (IOC2) from Saccharomyces cerevisiae (strain ATCC 204508 / S288c) (Baker's yeast).